Consider the following 1529-residue polypeptide: Myosin-11 (1529 aa).

A Myosin N-terminal SH3-like domain is found at 11–60 (IVGSHVWIEDSDVAWIDGLVEKINGQDVEVQATNGKKITAKLSKIYPKDM). One can recognise a Myosin motor domain in the interval 65-735 (GGVDDMTKLS…QMAELDARRT (671 aa)). Residues 159 to 166 (GESGAGKT) and 212 to 220 (NNNSSRFGK) contribute to the ATP site. Actin-binding regions lie at residues 498–532 (LIEKKPGGIVALLDEACMFPKSTHETFANKLYQTF), 534–557 (THKRFIKPKLSRTDFAVAHYAGEV), 592–616 (FPPLPEETSKSSKFSSIGSRFKLQL), and 616–638 (LQQLMETLNSTEPHYIRCVKPNN). IQ domains lie at 738-767 (LSAAAKKIQRRIRTHQAQRRFILLRKATIS), 761-790 (LRKATISLQALCRGRLSSKIFDNLRRQAAA), 786-815 (RQAAAVKIQKNARRLHSRKSYKNLHVAALV), 809-838 (LHVAALVVQTGLRAMAAHKQFRFRKQTKAA), 834-863 (QTKAATTIQAQFRCHRATLYFKKLKKGVIL), and 857-886 (LKKGVILSQTRWRGKLARRELRQLKMASRE). Residues 887–1059 (TGALKEAKDM…VLRQQAVSIA (173 aa)) are a coiled coil. The span at 993 to 1027 (EQEKQRADDATRKFDEAQESSEDRKKKLEDTEKKA) shows a compositional bias: basic and acidic residues. Disordered stretches follow at residues 993 to 1031 (EQEKQRADDATRKFDEAQESSEDRKKKLEDTEKKAQQLQ) and 1096 to 1115 (INRRDLSEVDDKPQKSLNEK). In terms of domain architecture, Dilute spans 1163-1472 (DRIIQTIGQA…IANMRVLMTE (310 aa)).

This sequence belongs to the TRAFAC class myosin-kinesin ATPase superfamily. Myosin family. Plant myosin class XI subfamily. In terms of assembly, homodimer.

The protein resides in the cytoplasm. Its function is as follows. Myosin heavy chain that is required for the cell cycle-regulated transport of various organelles and proteins for their segregation. Functions by binding with its tail domain to receptor proteins on organelles and exerting force with its N-terminal motor domain against actin filaments, thereby transporting its cargo along polarized actin cables. Involved in trafficking of Golgi stacks, mitochondria and peroxisomes. The polypeptide is Myosin-11 (XI-E) (Arabidopsis thaliana (Mouse-ear cress)).